Here is a 625-residue protein sequence, read N- to C-terminus: MKYLAGDFDVVVIGAGHAGCEAALASARMGCKTLICTMNLDSIALMACNPNIGGTAKGHLVREIDALGGEMGINIDHTFIQSRMLNTSKGPAVHSLRAQADKKRYSERMKHLLEKEENVVLRQLEVIEIDVEDNEVKGVLTKNGAYFTTKAIILCTGTYLKGKIIIGDIIYSSGPSGLYPANDLSQSLLNLGINLRRFKTGTPARINKRSVDFSKMIEQPGDEKIVPFSFIHNKLDKDQISCYLTYTSEETHKIIHENIHRSPLYNGSIEGVGPRYCPSIEDKIVRFPDKDKHQIFIEPEGENTEELYVGGMSSSLPEDVQIKMYRSVPGLENAEILRTAYAIEYDCIDPQQLDLTLEFKNINGLYGAGQFNGSSGYEEAAAQGLIAGINAVLKIKEKNPLILKRSDAYIGVLIDDLVTKGTNEPYRMMTSRAEYRLLLRQDNADLRLTELGYKVGLVKEDRYNKFLNRKKNVENEIERLRNMQITGKREINEFLLEKGSTELKKPISLYELIKRPELDYFKVEPLDDKRPSLSDDEKEEINIIAKYEGYINKQLEQVEQFKKYEDRLIPKSINYLDIKGLRLEAIQKLEKIKPINIGQASRISGVSPADISVLLIYMERKDREN.

14–19 contacts FAD; sequence GAGHAG. NAD(+) is bound at residue 273–287; that stretch reads GPRYCPSIEDKIVRF.

It belongs to the MnmG family. In terms of assembly, homodimer. Heterotetramer of two MnmE and two MnmG subunits. FAD is required as a cofactor.

The protein localises to the cytoplasm. In terms of biological role, NAD-binding protein involved in the addition of a carboxymethylaminomethyl (cmnm) group at the wobble position (U34) of certain tRNAs, forming tRNA-cmnm(5)s(2)U34. This Clostridium botulinum (strain Okra / Type B1) protein is tRNA uridine 5-carboxymethylaminomethyl modification enzyme MnmG.